A 72-amino-acid chain; its full sequence is Translational regulator CsrA (72 aa).

The protein belongs to the CsrA/RsmA family. In terms of assembly, homodimer; the beta-strands of each monomer intercalate to form a hydrophobic core, while the alpha-helices form wings that extend away from the core.

Its subcellular location is the cytoplasm. Its function is as follows. A translational regulator that binds mRNA to regulate translation initiation and/or mRNA stability. Usually binds in the 5'-UTR at or near the Shine-Dalgarno sequence preventing ribosome-binding, thus repressing translation. Its main target seems to be the major flagellin gene, while its function is anatagonized by FliW. The sequence is that of Translational regulator CsrA from Lachnoclostridium phytofermentans (strain ATCC 700394 / DSM 18823 / ISDg) (Clostridium phytofermentans).